We begin with the raw amino-acid sequence, 445 residues long: tRNA-2-methylthio-N(6)-dimethylallyladenosine synthase (445 aa).

Residues Lys-3–Arg-124 enclose the MTTase N-terminal domain. [4Fe-4S] cluster-binding residues include Cys-12, Cys-48, Cys-87, Cys-162, Cys-166, and Cys-169. A Radical SAM core domain is found at Tyr-148–Ala-380. Residues Gln-383 to Leu-445 form the TRAM domain.

The protein belongs to the methylthiotransferase family. MiaB subfamily. Monomer. Requires [4Fe-4S] cluster as cofactor.

The protein localises to the cytoplasm. It carries out the reaction N(6)-dimethylallyladenosine(37) in tRNA + (sulfur carrier)-SH + AH2 + 2 S-adenosyl-L-methionine = 2-methylsulfanyl-N(6)-dimethylallyladenosine(37) in tRNA + (sulfur carrier)-H + 5'-deoxyadenosine + L-methionine + A + S-adenosyl-L-homocysteine + 2 H(+). Its function is as follows. Catalyzes the methylthiolation of N6-(dimethylallyl)adenosine (i(6)A), leading to the formation of 2-methylthio-N6-(dimethylallyl)adenosine (ms(2)i(6)A) at position 37 in tRNAs that read codons beginning with uridine. This Rickettsia prowazekii (strain Madrid E) protein is tRNA-2-methylthio-N(6)-dimethylallyladenosine synthase.